The primary structure comprises 200 residues: GTP cyclohydrolase 1 (200 aa).

Zn(2+) contacts are provided by cysteine 87, histidine 90, and cysteine 158.

The protein belongs to the GTP cyclohydrolase I family. In terms of assembly, toroid-shaped homodecamer, composed of two pentamers of five dimers.

It carries out the reaction GTP + H2O = 7,8-dihydroneopterin 3'-triphosphate + formate + H(+). The protein operates within cofactor biosynthesis; 7,8-dihydroneopterin triphosphate biosynthesis; 7,8-dihydroneopterin triphosphate from GTP: step 1/1. The polypeptide is GTP cyclohydrolase 1 (Xanthomonas euvesicatoria pv. vesicatoria (strain 85-10) (Xanthomonas campestris pv. vesicatoria)).